The chain runs to 142 residues: Large ribosomal subunit protein uL22c (142 aa).

Belongs to the universal ribosomal protein uL22 family. In terms of assembly, part of the 50S ribosomal subunit.

The protein resides in the plastid. It localises to the chloroplast. In terms of biological role, this protein binds specifically to 23S rRNA. Functionally, the globular domain of the protein is located near the polypeptide exit tunnel on the outside of the subunit, while an extended beta-hairpin is found that lines the wall of the exit tunnel in the center of the 70S ribosome. The protein is Large ribosomal subunit protein uL22c (rpl22) of Oenothera parviflora (Small-flowered evening primrose).